Consider the following 438-residue polypeptide: Na(+)/H(+) antiporter NhaA (438 aa).

The next 11 membrane-spanning stretches (helical) occupy residues 23-43, 62-82, 104-124, 133-153, 162-182, 185-205, 212-232, 302-322, 337-357, 372-392, and 410-430; these read FGGI…NSFV, FFIG…LFFL, SFPV…YFFL, GFGI…MLLG, VFLI…IALF, TNLK…LALL, SLIP…QSGI, FLAP…NAGV, LGVI…ITFI, WWHI…SMFI, and IAIL…LFLL.

It belongs to the NhaA Na(+)/H(+) (TC 2.A.33) antiporter family.

It localises to the cell inner membrane. The catalysed reaction is Na(+)(in) + 2 H(+)(out) = Na(+)(out) + 2 H(+)(in). In terms of biological role, na(+)/H(+) antiporter that extrudes sodium in exchange for external protons. The polypeptide is Na(+)/H(+) antiporter NhaA (Helicobacter acinonychis (strain Sheeba)).